The following is a 228-amino-acid chain: MTQQDIKLIAFDLDGTLLDSVPDLAVAADQAVQALGYPAVSEEQVRDYVGNGADVLIGRALSQSMTISSDLSEDLRAKGRELFDDFYAQSGHQLSHLYPTVKETLEELHQAGFTMALVTNKPSKFVPEILEQHGIAKYFVDVLGGDAFPEKKPNPVALNWLMEKHQVKASEMLMVGDSKNDILAAKNAGCASFGLTYGYNHGEPISASNPDFVADSLSELLEVVAVSA.

Catalysis depends on Asp12, which acts as the Nucleophile. Mg(2+) contacts are provided by Asp12, Asp14, and Asp177.

Belongs to the HAD-like hydrolase superfamily. CbbY/CbbZ/Gph/YieH family. Requires Mg(2+) as cofactor.

The enzyme catalyses 2-phosphoglycolate + H2O = glycolate + phosphate. It functions in the pathway organic acid metabolism; glycolate biosynthesis; glycolate from 2-phosphoglycolate: step 1/1. Specifically catalyzes the dephosphorylation of 2-phosphoglycolate. Is involved in the dissimilation of the intracellular 2-phosphoglycolate formed during the DNA repair of 3'-phosphoglycolate ends, a major class of DNA lesions induced by oxidative stress. The polypeptide is Phosphoglycolate phosphatase (Vibrio parahaemolyticus serotype O3:K6 (strain RIMD 2210633)).